Consider the following 118-residue polypeptide: Thioredoxin H3 (118 aa).

Alanine 2 is subject to N-acetylalanine. The 112-residue stretch at 2 to 113 (AAEGEVIACH…IIANLEKHKT (112 aa)) folds into the Thioredoxin domain. Catalysis depends on nucleophile residues cysteine 39 and cysteine 42. The cysteines at positions 39 and 42 are disulfide-linked.

The protein belongs to the thioredoxin family. Plant H-type subfamily. As to quaternary structure, interacts with FBA5 and FBA8. Interacts with FBA6. Interacts with MDH1.

The protein resides in the cytoplasm. Functionally, thiol-disulfide oxidoreductase that possesses disulfide reductase and insulin disulfide bonds reducing activities. Heat shock causes oligomerization and formation of high molecular weight (HMW) complexes with concomitant functional switching from a disulfide reductase to chaperone. The protein is Thioredoxin H3 (TRX3) of Arabidopsis thaliana (Mouse-ear cress).